The chain runs to 221 residues: Protein LURP-one-related 17 (221 aa).

The segment at 1-20 (MFPFLKQRSRSVHGEDAPSS) is disordered.

This sequence belongs to the LOR family.

Might be related to the phospholipid scramblase and tubby-like superfamily of membrane tethered transcription factors. The polypeptide is Protein LURP-one-related 17 (Arabidopsis thaliana (Mouse-ear cress)).